The chain runs to 283 residues: Pseudokinase OPG198 (283 aa).

Positions 1 and 30 each coordinate ATP. Residues 1 to 283 (MESFKYCFDN…DRLRRLFIQD (283 aa)) enclose the Protein kinase domain.

It belongs to the protein kinase superfamily. Ser/Thr protein kinase family. Poxviruses subfamily. As to quaternary structure, interacts with B1/VPK1. Interacts with host VRK1. Interacts with host VRK2.

The protein resides in the host nucleus. Both catalytically active kinases B1/VPK1 and host VRK2 repress B12 inhibitory activity in a B1/VPK1 deletion mutant strain. Pseudokinase that plays a role in viral DNA replication repression by activating the antiviral protein BANF1 and inhibiting the activity of host VRK1, a cellular modulator of BANF1. The sequence is that of Pseudokinase OPG198 (OPG198) from Vaccinia virus (strain Ankara) (VACV).